Here is a 452-residue protein sequence, read N- to C-terminus: Nuclear distribution protein nudF 2 (452 aa).

A coiled-coil region spans residues 76–101; the sequence is ALQILDLESKVAGLQAELSSLTLTSR. WD repeat units lie at residues 123–164, 166–206, 210–250, 253–292, 295–355, 357–396, and 401–449; these read SHRD…RTLK, HIRA…ANIR, GHDH…CVKV, SSDAWIRDISSSFDGKWLVAGGRDQAVTVWEVATAEQKSA, GHEN…IKTL, GHDNWVRDLVFHPNGKHLISVADDKTIRCWDLSQEGKLVK, and AHSH…SCVR.

It belongs to the WD repeat LIS1/nudF family. As to quaternary structure, self-associates. Interacts with nudE and dynein.

The protein localises to the cytoplasm. It is found in the cytoskeleton. The protein resides in the spindle pole. In terms of biological role, positively regulates the activity of the minus-end directed microtubule motor protein dynein. May enhance dynein-mediated microtubule sliding by targeting dynein to the microtubule plus end. Required for nuclear migration during vegetative growth as well as development. Required for retrograde early endosome (EE) transport from the hyphal tip. Required for localization of dynein to the mitotic spindle poles. Recruits additional proteins to the dynein complex at SPBs. The chain is Nuclear distribution protein nudF 2 from Talaromyces marneffei (strain ATCC 18224 / CBS 334.59 / QM 7333) (Penicillium marneffei).